Here is a 182-residue protein sequence, read N- to C-terminus: Adenine phosphoribosyltransferase (182 aa).

The protein belongs to the purine/pyrimidine phosphoribosyltransferase family. As to quaternary structure, homodimer.

It localises to the cytoplasm. The enzyme catalyses AMP + diphosphate = 5-phospho-alpha-D-ribose 1-diphosphate + adenine. It participates in purine metabolism; AMP biosynthesis via salvage pathway; AMP from adenine: step 1/1. In terms of biological role, catalyzes a salvage reaction resulting in the formation of AMP, that is energically less costly than de novo synthesis. This chain is Adenine phosphoribosyltransferase, found in Koribacter versatilis (strain Ellin345).